A 456-amino-acid chain; its full sequence is RUN domain-containing protein 3B (456 aa).

The tract at residues 1 to 26 (MASRSLGGLSGIRGGGGGGGKKSLSS) is disordered. Gly residues predominate over residues 8-21 (GLSGIRGGGGGGGK). Position 13 is an omega-N-methylarginine (Arg13). The RUN domain occupies 57 to 189 (DDSSPEFNNF…IDFSFCLKGE (133 aa)). A phosphoserine mark is found at Ser215 and Ser216. Residues 300-325 (AHKLEKEQLEYIIVELQDQLTVLKNN) adopt a coiled-coil conformation. Residues 382 to 405 (SLSQTSLDPGQSQEGDGKQDTLNI) form a disordered region.

Belongs to the RUNDC3 family. Interacts with RAP2A.

The protein is RUN domain-containing protein 3B (RUNDC3B) of Macaca fascicularis (Crab-eating macaque).